A 585-amino-acid polypeptide reads, in one-letter code: A-type ATP synthase subunit A (585 aa).

Residue 231 to 238 (GPFGSGKT) participates in ATP binding.

The protein belongs to the ATPase alpha/beta chains family. As to quaternary structure, has multiple subunits with at least A(3), B(3), C, D, E, F, H, I and proteolipid K(x).

Its subcellular location is the cell membrane. It catalyses the reaction ATP + H2O + 4 H(+)(in) = ADP + phosphate + 5 H(+)(out). Functionally, component of the A-type ATP synthase that produces ATP from ADP in the presence of a proton gradient across the membrane. The A chain is the catalytic subunit. The chain is A-type ATP synthase subunit A from Desulfurococcus sp. (strain SY).